The following is a 207-amino-acid chain: Vexin (207 aa).

Positions 55-102 (LELLPHRGDRRDPGDGRRFGRLQTARPPTAHPAKASARPVGISEPKTS) are disordered. A compositionally biased stretch (basic and acidic residues) spans 58 to 72 (LPHRGDRRDPGDGRR).

This sequence belongs to the vexin family.

It localises to the cell membrane. It is found in the nucleus. Required for neurogenesis in the neural plate and retina. Strongly cooperates with neural bHLH factors to promote neurogenesis. This Pongo abelii (Sumatran orangutan) protein is Vexin.